Consider the following 214-residue polypeptide: Adenylate kinase (214 aa).

10-15 (GAGKGT) contacts ATP. The segment at 30–59 (STGDMLRSAVKAGTELGLKAKALMDHGKLV) is NMP. Residues threonine 31, arginine 36, 57–59 (KLV), 85–88 (GFPR), and glutamine 92 each bind AMP. Positions 122–159 (GRRIHAPSGRVYHIKFNPPVVENKDDVTGEELTVRKDD) are LID. ATP-binding positions include arginine 123 and 132 to 133 (VY). AMP contacts are provided by arginine 156 and arginine 167. Arginine 200 is an ATP binding site.

The protein belongs to the adenylate kinase family. Monomer.

Its subcellular location is the cytoplasm. The enzyme catalyses AMP + ATP = 2 ADP. Its pathway is purine metabolism; AMP biosynthesis via salvage pathway; AMP from ADP: step 1/1. Its function is as follows. Catalyzes the reversible transfer of the terminal phosphate group between ATP and AMP. Plays an important role in cellular energy homeostasis and in adenine nucleotide metabolism. This chain is Adenylate kinase, found in Photorhabdus laumondii subsp. laumondii (strain DSM 15139 / CIP 105565 / TT01) (Photorhabdus luminescens subsp. laumondii).